Reading from the N-terminus, the 722-residue chain is Mesentericin-Y105 transport/processing ATP-binding protein MesD (722 aa).

A Peptidase C39 domain is found at 16–143 (QVDERDCGVA…EEWTGVSIFI (128 aa)). Cys-22 is an active-site residue. The next 8 membrane-spanning stretches (helical) occupy residues 171-191 (LLVI…ILGS), 210-230 (LGIV…LSYA), 242-262 (LSID…MSFF), 287-307 (TMLS…VLVV), 311-331 (TLFL…WLFM), 401-421 (SLLQ…LVMT), 429-449 (LITY…IINL), and 518-538 (IALV…LVNF). Positions 173 to 455 (VINIVIAALL…IINLQTKLQQ (283 aa)) constitute an ABC transmembrane type-1 domain. The ABC transporter domain occupies 489-722 (LVADHITYKY…GGFYASLFNH (234 aa)). 522–529 (GISGSGKS) serves as a coordination point for ATP.

This sequence belongs to the ABC transporter superfamily.

The protein localises to the cell membrane. Its function is as follows. Involved in the export process of the bacteriocin mesentericin-Y105. This chain is Mesentericin-Y105 transport/processing ATP-binding protein MesD (mesD), found in Leuconostoc mesenteroides.